Here is a 251-residue protein sequence, read N- to C-terminus: uncharacterized protein (251 aa).

The signal sequence occupies residues 1–18 (MRILIILSIILCSLSIRA).

Belongs to the MlaA family.

This is an uncharacterized protein from Rickettsia conorii (strain ATCC VR-613 / Malish 7).